The chain runs to 458 residues: Alpha-2C adrenergic receptor (458 aa).

Over 1–51 the chain is Extracellular; that stretch reads MASPALAAALAAAAAEGPNGSDAGEWGSGGGANASGTDWVPPPGQYSAGAV. N19 and N33 each carry an N-linked (GlcNAc...) asparagine glycan. A helical transmembrane segment spans residues 52–76; sequence AGLAAVVGFLIVFTVVGNVLVVIAV. Residues 77–88 are Cytoplasmic-facing; the sequence is LTSRALRAPQNL. The chain crosses the membrane as a helical span at residues 89 to 114; that stretch reads FLVSLASADILVATLVMPFSLANELM. Residues 115–124 are Extracellular-facing; sequence AYWYFGQVWC. Residues C124 and C202 are joined by a disulfide bond. The chain crosses the membrane as a helical span at residues 125–147; that stretch reads GVYLALDVLFCTSSIVHLCAISL. Over 148 to 168 the chain is Cytoplasmic; the sequence is DRYWSVTQAVEYNLKRTPRRV. The helical transmembrane segment at 169–191 threads the bilayer; the sequence is KATIVAVWLISAVISFPPLVSFY. At 192–207 the chain is on the extracellular side; that stretch reads RRPDGAAYPQCGLNDE. Residues 208 to 231 form a helical membrane-spanning segment; that stretch reads TWYILSSCIGSFFAPCLIMGLVYA. The Cytoplasmic segment spans residues 232 to 379; it reads RIYRVAKLRT…QAREKRFTFV (148 aa). Positions 245–343 are disordered; it reads SEKRGPAGPD…SPGPGGRLSR (99 aa). The segment covering 291 to 303 has biased composition (basic residues); it reads RRRRRGALRRGGR. A helical membrane pass occupies residues 380–403; the sequence is LAVVMGVFVLCWFPFFFSYSLYGI. Residues 404 to 416 are Extracellular-facing; sequence CREACQLPEPLFK. The chain crosses the membrane as a helical span at residues 417-437; the sequence is FFFWIGYCNSSLNPVIYTVFN. The Cytoplasmic portion of the chain corresponds to 438-458; sequence QDFRRSFKHILFRRRRRGFRQ.

This sequence belongs to the G-protein coupled receptor 1 family. Adrenergic receptor subfamily. ADRA2C sub-subfamily.

Its subcellular location is the cell membrane. Its function is as follows. Alpha-2 adrenergic receptors mediate the catecholamine-induced inhibition of adenylate cyclase through the action of G proteins. In Mus musculus (Mouse), this protein is Alpha-2C adrenergic receptor (Adra2c).